A 175-amino-acid chain; its full sequence is Inorganic pyrophosphatase 1 (175 aa).

3 residues coordinate substrate: Lys-30, Arg-44, and Tyr-56. Asp-66, Asp-71, and Asp-103 together coordinate Mg(2+). Tyr-142 contributes to the substrate binding site.

It belongs to the PPase family. As to quaternary structure, homohexamer. Requires Mg(2+) as cofactor.

It is found in the cytoplasm. It catalyses the reaction diphosphate + H2O = 2 phosphate + H(+). In terms of biological role, catalyzes the hydrolysis of inorganic pyrophosphate (PPi) forming two phosphate ions. This Pseudomonas syringae pv. tomato (strain ATCC BAA-871 / DC3000) protein is Inorganic pyrophosphatase 1.